The following is a 431-amino-acid chain: Indole diterpene prenyltransferase nodD1 (431 aa).

Residue 85 to 86 (FI) coordinates L-tryptophan. Substrate-binding residues include R107, K194, R268, K270, Y272, and Y353.

Belongs to the tryptophan dimethylallyltransferase family.

Its pathway is secondary metabolite biosynthesis. Indole diterpene prenyltransferase; part of the gene cluster that mediates the biosynthesis of the indole diterpenes nodulisporic acids (NA). Nodulisporic acid A (NAA) and its chemically modified derivatives are of particular significance because of their highly potent insecticidal activity against blood-feeding arthropods and lack of observable adverse effects on mammals, in particular the tremogenicity associated with the paspaline-derived IDTs is not observed. The geranylgeranyl diphosphate (GGPP) synthase ggs1, localized outside of the cluster, is proposed to catalyze the first step in nodulisporic acid biosynthesis via conversion of farnesyl pyrophosphate and isopentyl pyrophosphate into geranylgeranyl pyrophosphate (GGPP). Condensation of indole-3-glycerol phosphate with GGPP by the prenyl transferase nodC then forms 3-geranylgeranylindole (3-GGI). Epoxidation by the FAD-dependent monooxygenase nodM leads to a single-epoxidized-GGI that is substrate of the terpene cyclase nodB for cyclization to yield emindole SB. The terminal methyl carbon, C28, of emindole SB is then oxidized by the cytochrome P450 monooxygenase nodW to produce nodulisporic acid F (NAF), the pentacyclic core of NAA. NAF is converted to nodulisporic acid E (NAE) via prenylation. This step is probably performed by one of the indole diterpene prenyltransferases nodD1 or nodD2. Several oxidation steps performed by the FAD-linked oxidoreductase nodO and one of the cytochrome P450 monooxygenase nodR, nodX or nodZ further convert NAE to nodulisporic acid D (NAD). NAD is substrate of cytochrome P450 monooxygenase nodJ to produce the precursor of nodulisporic acid C (NAC), converted to NAC by one of the indole diterpene prenyltransferases nodD1 or nodD2. The FAD-dependent monooxygenase nodY2 then oxidizes NAC to nodulisporic acid B (NAB). Finally NAB is converted to NAA by one of the cytochrome P450 monooxygenases nodR, nodX or nodZ. This is Indole diterpene prenyltransferase nodD1 from Hypoxylon pulicicidum.